The primary structure comprises 275 residues: Lectin (275 aa).

A signal peptide spans 1-30 (MASLQTQMISFYLIFLSILLTTIFFFKVNS). D-glucose is bound by residues Asp111 and Gly129. 2 residues coordinate Mn(2+): Glu149 and Asp151. The Ca(2+) site is built by Asp151, Phe153, Asn155, and Asp159. The Mn(2+) site is built by Asp159 and His166. Positions 211–217 (NSLEEEN) are excised as a propeptide. D-glucose contacts are provided by Gly246 and Ala247. Residues 270–275 (KQAADA) constitute a propeptide that is removed on maturation.

It belongs to the leguminous lectin family. In terms of assembly, heterotetramer of two alpha and two beta chains. The mature form consists of two chains, alpha and beta, produced by cleavage of the immature protein. These remain cleaved, yet fold together to form one subunit.

Functionally, D-mannose specific lectin. The chain is Lectin from Lens culinaris subsp. orientalis (Oriental wild lentil).